The primary structure comprises 426 residues: Serine/threonine-protein kinase SRPK (426 aa).

Positions 1-23 (MENIFKEKEKGKEKAKEEEKEND) are enriched in basic and acidic residues. The segment at 1–40 (MENIFKEKEKGKEKAKEEEKENDSGDLFDSEDEGTEDYKK) is disordered. The span at 24–35 (SGDLFDSEDEGT) shows a compositional bias: acidic residues. Residues 56-419 (YRIVKKLGWG…ARDSLEHPYM (364 aa)) enclose the Protein kinase domain. ATP-binding positions include 62–70 (LGWGHFSTV) and Lys-86. Catalysis depends on Asp-188, which acts as the Proton acceptor. The Nuclear localization signal signature appears at 318-328 (PKKGDKYDKTD).

Belongs to the protein kinase superfamily. CMGC Ser/Thr protein kinase family.

The protein localises to the nucleus. The catalysed reaction is L-seryl-[protein] + ATP = O-phospho-L-seryl-[protein] + ADP + H(+). It catalyses the reaction L-threonyl-[protein] + ATP = O-phospho-L-threonyl-[protein] + ADP + H(+). In terms of biological role, phosphorylates serine/arginine-rich protein PSR. The sequence is that of Serine/threonine-protein kinase SRPK from Physarum polycephalum (Slime mold).